The sequence spans 331 residues: D-alanine--D-alanine ligase (331 aa).

One can recognise an ATP-grasp domain in the interval 112 to 314 (KRIWRSEGLP…YEDLCLRLLA (203 aa)). Residue 138-193 (LQTLGAPMIVKPAREGSTIGLSKVHQAQQCASAYLLAARYDPEVLCEQFIAGDELT) participates in ATP binding. Positions 267, 281, and 283 each coordinate Mg(2+).

The protein belongs to the D-alanine--D-alanine ligase family. Requires Mg(2+) as cofactor. It depends on Mn(2+) as a cofactor.

It is found in the cytoplasm. The enzyme catalyses 2 D-alanine + ATP = D-alanyl-D-alanine + ADP + phosphate + H(+). It functions in the pathway cell wall biogenesis; peptidoglycan biosynthesis. Functionally, cell wall formation. This Verminephrobacter eiseniae (strain EF01-2) protein is D-alanine--D-alanine ligase.